Consider the following 219-residue polypeptide: EP300-interacting inhibitor of differentiation 2 (219 aa).

The interval 1-71 (MSELPADQGV…PVPEAREGPM (71 aa)) is disordered. A compositionally biased stretch (basic and acidic residues) spans 20–34 (GDVRQAEVGGRRREP). Arg75 bears the Omega-N-methylarginine mark. Residues 95-115 (AEPAEEEGPEGRPRSRPGNGP) are disordered.

In terms of assembly, heterodimer with EID2B. Interacts with the C-terminus of EP300. Interacts with HDAC1 and HDAC2. Interacts with SMAD2, SMAD4 and with the MH2 domain of SMAD3.

The protein localises to the nucleus. Functionally, interacts with EP300 and acts as a repressor of MYOD-dependent transcription and muscle differentiation. Inhibits EP300 histone acetyltransferase activity. Acts as a repressor of TGFB/SMAD transcriptional responses. May act as a repressor of the TGFB/SMAD3-dependent signaling by selectively blocking formation of TGFB-induced SMAD3-SMAD4 complex. This is EP300-interacting inhibitor of differentiation 2 from Bos taurus (Bovine).